Reading from the N-terminus, the 105-residue chain is Endogenous retrovirus group K member 8 Rec protein (105 aa).

Positions 1 to 48 (MNPSEMQRKAPPRRRRHRNRAPLTHKMNKMVTSEEQMKLPSTKKAEPP) are disordered. Basic residues predominate over residues 10-20 (APPRRRRHRNR). The Nuclear localization signal motif lies at 13–20 (RRRRHRNR). The Nuclear export signal signature appears at 50-59 (WAQLKKLTQL).

In terms of assembly, forms homodimers, homotrimers, and homotetramers via a C-terminal domain. Associates with XPO1 and with ZNF145.

The protein localises to the cytoplasm. It is found in the nucleus. Its subcellular location is the nucleolus. Functionally, retroviral replication requires the nuclear export and translation of unspliced, singly-spliced and multiply-spliced derivatives of the initial genomic transcript. Rec interacts with a highly structured RNA element (RcRE) present in the viral 3'LTR and recruits the cellular nuclear export machinery. This permits export to the cytoplasm of unspliced genomic or incompletely spliced subgenomic viral transcripts. The polypeptide is Endogenous retrovirus group K member 8 Rec protein (ERVK-8) (Homo sapiens (Human)).